A 649-amino-acid chain; its full sequence is uncharacterized protein (649 aa).

It is found in the nucleus. It localises to the cytoplasm. This is an uncharacterized protein from Schizosaccharomyces pombe (strain 972 / ATCC 24843) (Fission yeast).